Consider the following 359-residue polypeptide: Acidic skeletal organic matrix protein (359 aa).

Positions 1–26 are cleaved as a signal peptide; it reads MLAPRLAFVLLLSSYFGSILITSVES. 2 disordered regions span residues 60–83 and 224–254; these read FEEDDDDDDDEDNEESENEVEDFD and SEAEDPEEVDDAKRAETGKDPICVDPDDPNE. A coiled-coil region spans residues 66–89; sequence DDDDEDNEESENEVEDFDDENALS.

As to expression, component of the acid-insoluble and acid-soluble organic matrix of the aragonitic skeleton (at protein level).

It localises to the secreted. The protein is Acidic skeletal organic matrix protein of Acropora millepora (Staghorn coral).